Reading from the N-terminus, the 377-residue chain is Gap junction gamma-1 protein (377 aa).

Over 1–18 the chain is Cytoplasmic; the sequence is MSWSFLTRLLEEINNHST. The chain crosses the membrane as a helical span at residues 19-39; that stretch reads FVGKVWLTVLIIFRIVLTAVG. Residues 40-75 are Extracellular-facing; the sequence is GESIYYDEQSKFTCNTQQPGCENVCYDAFAPLSHVR. A helical transmembrane segment spans residues 76 to 96; the sequence is FWVFQIILITTPSIMYLGFAM. The Cytoplasmic portion of the chain corresponds to 97–174; that stretch reads HRIARQPEMQ…RRIKQDGLMK (78 aa). The disordered stretch occupies residues 129–163; sequence DYEEAEDNQEEDPMICEEEEPEKDSEKGDKKKHDG. Residues 131–151 show a composition bias toward acidic residues; that stretch reads EEAEDNQEEDPMICEEEEPEK. A helical transmembrane segment spans residues 175 to 197; that stretch reads VYVLQLLFRSVFEVGFLMGQYIL. Residues 198–228 are Extracellular-facing; that stretch reads YGFEVIPFFVCSRKPCPHTVDCFVSRPTEKT. The helical transmembrane segment at 229 to 249 threads the bilayer; the sequence is IFLLIMYAVSALCLFLNLCEL. Residues 250–377 lie on the Cytoplasmic side of the membrane; it reads FHLGIGGIRD…GVGNREKSGL (128 aa). 2 disordered regions span residues 265 to 294 and 334 to 377; these read KKEL…LPNG and LNPT…KSGL. Residues 337–362 are compositionally biased toward polar residues; that stretch reads TGDNTHASRSSSPESNSIAAEQNRLN.

This sequence belongs to the connexin family. Gamma-type subfamily. As to quaternary structure, a connexon is composed of a hexamer of connexins.

It is found in the cell membrane. It localises to the cell junction. Its subcellular location is the gap junction. Functionally, one gap junction consists of a cluster of closely packed pairs of transmembrane channels, the connexons, through which materials of low MW diffuse from one cell to a neighboring cell. The polypeptide is Gap junction gamma-1 protein (gjc1) (Xenopus tropicalis (Western clawed frog)).